The chain runs to 692 residues: Serine/threonine-protein kinase Nek8 (692 aa).

A Protein kinase domain is found at 4 to 258; it reads YERIRVVGRG…LSHIMAQPLC (255 aa). ATP is bound by residues 10–18 and Lys33; that span reads VGRGAFGIV. Residue Asp128 is the Proton acceptor of the active site. Thr162 carries the phosphothreonine; by autocatalysis modification. Residues 277–301 are disordered; that stretch reads AEKSVAPSNTGSRTTSVRCRGIPRG. The span at 282–293 shows a compositional bias: polar residues; sequence APSNTGSRTTSV. RCC1 repeat units lie at residues 312 to 350, 410 to 461, 462 to 513, 580 to 631, and 632 to 684; these read SSVY…VTRS, GIIM…LSTE, RELF…LTVP, GDCY…IGAE, and SEVY…AVRS.

This sequence belongs to the protein kinase superfamily. NEK Ser/Thr protein kinase family. NIMA subfamily. In terms of assembly, interacts with PKD2; may regulate PKD2 targeting to the cilium. Interacts with ANKS6. Component of a complex containing at least ANKS6, INVS, NEK8 and NPHP3. ANKS6 may organize complex assembly by linking INVS and NPHP3 to NEK8 and INVS may target the complex to the proximal ciliary axoneme. Interacts with ANKS3. The cofactor is Mg(2+). In terms of tissue distribution, highest expression in thyroid, adrenal gland and skin. Low levels in spleen, colon and uterus. Overexpressed in breast tumors, with highest expression in infiltrating ductal carcinomas and moderate levels in mucinous adenocarcinoma.

It is found in the cytoplasm. The protein resides in the cytoskeleton. Its subcellular location is the cell projection. It localises to the cilium. The protein localises to the microtubule organizing center. It is found in the centrosome. The protein resides in the cilium axoneme. The catalysed reaction is L-seryl-[protein] + ATP = O-phospho-L-seryl-[protein] + ADP + H(+). The enzyme catalyses L-threonyl-[protein] + ATP = O-phospho-L-threonyl-[protein] + ADP + H(+). Its function is as follows. Required for renal tubular integrity. May regulate local cytoskeletal structure in kidney tubule epithelial cells. May regulate ciliary biogenesis through targeting of proteins to the cilia. Plays a role in organogenesis, and is involved in the regulation of the Hippo signaling pathway. The protein is Serine/threonine-protein kinase Nek8 (NEK8) of Homo sapiens (Human).